Here is a 360-residue protein sequence, read N- to C-terminus: tRNA N6-adenosine threonylcarbamoyltransferase (360 aa).

Residues H111 and H115 each contribute to the Fe cation site. Substrate-binding positions include 134 to 138 (LVSGG), D167, G180, D184, and N279. Position 307 (D307) interacts with Fe cation.

It belongs to the KAE1 / TsaD family. It depends on Fe(2+) as a cofactor.

The protein localises to the cytoplasm. The catalysed reaction is L-threonylcarbamoyladenylate + adenosine(37) in tRNA = N(6)-L-threonylcarbamoyladenosine(37) in tRNA + AMP + H(+). Its function is as follows. Required for the formation of a threonylcarbamoyl group on adenosine at position 37 (t(6)A37) in tRNAs that read codons beginning with adenine. Is involved in the transfer of the threonylcarbamoyl moiety of threonylcarbamoyl-AMP (TC-AMP) to the N6 group of A37, together with TsaE and TsaB. TsaD likely plays a direct catalytic role in this reaction. The protein is tRNA N6-adenosine threonylcarbamoyltransferase of Acaryochloris marina (strain MBIC 11017).